We begin with the raw amino-acid sequence, 404 residues long: Cysteine desulfurase IscS (404 aa).

Residues 75-76 (AT), asparagine 155, glutamine 183, and 203-205 (SGH) each bind pyridoxal 5'-phosphate. An N6-(pyridoxal phosphate)lysine modification is found at lysine 206. Position 243 (threonine 243) interacts with pyridoxal 5'-phosphate. Residue cysteine 328 is the Cysteine persulfide intermediate of the active site. A [2Fe-2S] cluster-binding site is contributed by cysteine 328.

Belongs to the class-V pyridoxal-phosphate-dependent aminotransferase family. NifS/IscS subfamily. Homodimer. Forms a heterotetramer with IscU, interacts with other sulfur acceptors. Pyridoxal 5'-phosphate is required as a cofactor.

The protein resides in the cytoplasm. It carries out the reaction (sulfur carrier)-H + L-cysteine = (sulfur carrier)-SH + L-alanine. It functions in the pathway cofactor biosynthesis; iron-sulfur cluster biosynthesis. Its function is as follows. Master enzyme that delivers sulfur to a number of partners involved in Fe-S cluster assembly, tRNA modification or cofactor biosynthesis. Catalyzes the removal of elemental sulfur and selenium atoms from cysteine and selenocysteine to produce alanine. Functions as a sulfur delivery protein for Fe-S cluster synthesis onto IscU, an Fe-S scaffold assembly protein, as well as other S acceptor proteins. Also functions as a selenium delivery protein in the pathway for the biosynthesis of selenophosphate. The protein is Cysteine desulfurase IscS of Salmonella arizonae (strain ATCC BAA-731 / CDC346-86 / RSK2980).